The following is a 288-amino-acid chain: T-lymphocyte activation antigen CD80 (288 aa).

An N-terminal signal peptide occupies residues 1 to 34 (MGHTRRQGTSPSKCPYLNFFQLLVLAGLSHFCSG). Positions 35-135 (VIHVTKEVKE…FKREHLAEVT (101 aa)) constitute an Ig-like V-type domain. Residues 35-242 (VIHVTKEVKE…TTKQEHFPDN (208 aa)) lie on the Extracellular side of the membrane. Cystine bridges form between C50/C116 and C162/C216. Residues N53, N89, N98, N186, N207, N211, N226, and N232 are each glycosylated (N-linked (GlcNAc...) asparagine). The Ig-like C2-type domain maps to 145–230 (PSISDFEIPT…GHLRVNQTFN (86 aa)). A helical membrane pass occupies residues 243–263 (LLPSWAITLISVNGIFVICCL). Residues C261, C262, C266, and C271 are each lipidated (S-palmitoyl cysteine). Topologically, residues 264 to 288 (TYCFAPRCRERRRNERLRRESVRPV) are cytoplasmic. S284 is modified (phosphoserine).

In terms of assembly, homodimer. Interacts with CTLA4; this interaction inhibits T-cell activation. Interacts with PDL1/CD274; this interaction blocks PDL1/PDCD1 binding and thus PDL1/CD274 inhibitory function. Interacts with CD28. As to quaternary structure, (Microbial infection) Interacts with adenovirus subgroup B fiber proteins. (Microbial infection) Interacts with Orthopoxvirus OPG038/M2 protein, inhibiting the interaction with CTLA4/CD152. In terms of processing, palmitoylated by ZDHHC20; palmitoylation protects CD80 from ubiquitin-mediated degradation, regulating the protein stability, and ensures its accurate plasma membrane localization. Expressed on activated B-cells, macrophages and dendritic cells.

It is found in the cell membrane. Its function is as follows. Costimulatory molecule that belongs to the immunoglobulin superfamily that plays an important role in T-lymphocyte activation. Acts as the primary auxiliary signal augmenting the MHC/TCR signal in naive T-cells together with the CD28 receptor which is constitutively expressed on the cell surface of T-cells. In turn, activates different signaling pathways such as NF-kappa-B or MAPK leading to the production of different cytokines. In addition, CD28/CD80 costimulatory signal stimulates glucose metabolism and ATP synthesis of T-cells by activating the PI3K/Akt signaling pathway. Also acts as a regulator of PDL1/PDCD1 interactions to limit excess engagement of PDL1 and its inhibitory role in immune responses. Expressed on B-cells, plays a critical role in regulating interactions between B-cells and T-cells in both early and late germinal center responses, which are crucial for the generation of effective humoral immune responses. In terms of biological role, (Microbial infection) Acts as a receptor for adenovirus subgroup B. The protein is T-lymphocyte activation antigen CD80 (CD80) of Homo sapiens (Human).